The following is a 365-amino-acid chain: Cobalt-precorrin-5B C(1)-methyltransferase (365 aa).

Belongs to the CbiD family.

The enzyme catalyses Co-precorrin-5B + S-adenosyl-L-methionine = Co-precorrin-6A + S-adenosyl-L-homocysteine. The protein operates within cofactor biosynthesis; adenosylcobalamin biosynthesis; cob(II)yrinate a,c-diamide from sirohydrochlorin (anaerobic route): step 6/10. In terms of biological role, catalyzes the methylation of C-1 in cobalt-precorrin-5B to form cobalt-precorrin-6A. The polypeptide is Cobalt-precorrin-5B C(1)-methyltransferase (Clostridium perfringens (strain ATCC 13124 / DSM 756 / JCM 1290 / NCIMB 6125 / NCTC 8237 / Type A)).